A 497-amino-acid chain; its full sequence is 3-octaprenyl-4-hydroxybenzoate carboxy-lyase (497 aa).

Asparagine 175 serves as a coordination point for Mn(2+). Residues 178–180, 192–194, and 197–198 contribute to the prenylated FMN site; these read IYR, RWL, and RG. Residue glutamate 241 coordinates Mn(2+). Aspartate 290 (proton donor) is an active-site residue.

Belongs to the UbiD family. As to quaternary structure, homohexamer. Prenylated FMN serves as cofactor. The cofactor is Mn(2+).

Its subcellular location is the cell membrane. The catalysed reaction is a 4-hydroxy-3-(all-trans-polyprenyl)benzoate + H(+) = a 2-(all-trans-polyprenyl)phenol + CO2. The protein operates within cofactor biosynthesis; ubiquinone biosynthesis. In terms of biological role, catalyzes the decarboxylation of 3-octaprenyl-4-hydroxy benzoate to 2-octaprenylphenol, an intermediate step in ubiquinone biosynthesis. This chain is 3-octaprenyl-4-hydroxybenzoate carboxy-lyase, found in Shigella dysenteriae serotype 1 (strain Sd197).